Here is a 314-residue protein sequence, read N- to C-terminus: Carbamate kinase (314 aa).

Belongs to the carbamate kinase family.

It localises to the cytoplasm. It carries out the reaction hydrogencarbonate + NH4(+) + ATP = carbamoyl phosphate + ADP + H2O + H(+). Its pathway is metabolic intermediate metabolism; carbamoyl phosphate degradation; CO(2) and NH(3) from carbamoyl phosphate: step 1/1. This chain is Carbamate kinase (arcC), found in Latilactobacillus sakei (Lactobacillus sakei).